A 156-amino-acid polypeptide reads, in one-letter code: Small ribosomal subunit protein uS7 (156 aa).

It belongs to the universal ribosomal protein uS7 family. As to quaternary structure, part of the 30S ribosomal subunit. Contacts proteins S9 and S11.

Functionally, one of the primary rRNA binding proteins, it binds directly to 16S rRNA where it nucleates assembly of the head domain of the 30S subunit. Is located at the subunit interface close to the decoding center, probably blocks exit of the E-site tRNA. In Rhodopseudomonas palustris (strain BisB5), this protein is Small ribosomal subunit protein uS7.